Here is a 402-residue protein sequence, read N- to C-terminus: DNA polymerase IV (402 aa).

The UmuC domain maps to 5 to 187 (ILLADMNSFY…LPVRELFGVG (183 aa)). Residues Asp9 and Asp105 each contribute to the Mg(2+) site. The active site involves Glu106.

This sequence belongs to the DNA polymerase type-Y family. As to quaternary structure, monomer. The cofactor is Mg(2+).

It localises to the cytoplasm. It carries out the reaction DNA(n) + a 2'-deoxyribonucleoside 5'-triphosphate = DNA(n+1) + diphosphate. Poorly processive, error-prone DNA polymerase involved in untargeted mutagenesis. Copies undamaged DNA at stalled replication forks, which arise in vivo from mismatched or misaligned primer ends. These misaligned primers can be extended by PolIV. Exhibits no 3'-5' exonuclease (proofreading) activity. May be involved in translesional synthesis, in conjunction with the beta clamp from PolIII. In Pelotomaculum thermopropionicum (strain DSM 13744 / JCM 10971 / SI), this protein is DNA polymerase IV.